The sequence spans 166 residues: uncharacterized protein (166 aa).

This is an uncharacterized protein from Bacillus subtilis (strain 168).